Reading from the N-terminus, the 132-residue chain is Ribosome-binding factor A (132 aa).

Belongs to the RbfA family. As to quaternary structure, monomer. Binds 30S ribosomal subunits, but not 50S ribosomal subunits or 70S ribosomes.

It localises to the cytoplasm. Its function is as follows. One of several proteins that assist in the late maturation steps of the functional core of the 30S ribosomal subunit. Associates with free 30S ribosomal subunits (but not with 30S subunits that are part of 70S ribosomes or polysomes). Required for efficient processing of 16S rRNA. May interact with the 5'-terminal helix region of 16S rRNA. The protein is Ribosome-binding factor A of Edwardsiella ictaluri (strain 93-146).